A 357-amino-acid chain; its full sequence is Fructose-bisphosphate aldolase, cytoplasmic isozyme (357 aa).

R53 and K142 together coordinate substrate. E183 functions as the Proton acceptor in the catalytic mechanism. The active-site Schiff-base intermediate with dihydroxyacetone-P is the K225.

Belongs to the class I fructose-bisphosphate aldolase family.

The protein localises to the cytoplasm. The enzyme catalyses beta-D-fructose 1,6-bisphosphate = D-glyceraldehyde 3-phosphate + dihydroxyacetone phosphate. It participates in carbohydrate degradation; glycolysis; D-glyceraldehyde 3-phosphate and glycerone phosphate from D-glucose: step 4/4. The sequence is that of Fructose-bisphosphate aldolase, cytoplasmic isozyme from Spinacia oleracea (Spinach).